The primary structure comprises 222 residues: GTP cyclohydrolase 1 (222 aa).

The Zn(2+) site is built by cysteine 111, histidine 114, and cysteine 182.

This sequence belongs to the GTP cyclohydrolase I family. In terms of assembly, homomer.

The catalysed reaction is GTP + H2O = 7,8-dihydroneopterin 3'-triphosphate + formate + H(+). It participates in cofactor biosynthesis; 7,8-dihydroneopterin triphosphate biosynthesis; 7,8-dihydroneopterin triphosphate from GTP: step 1/1. This Salmonella gallinarum (strain 287/91 / NCTC 13346) protein is GTP cyclohydrolase 1.